The following is an 805-amino-acid chain: Phenylalanine--tRNA ligase beta subunit (805 aa).

Positions 39–148 constitute a tRNA-binding domain; it reads APPFTGVVVA…AALRPGTDIR (110 aa). The B5 domain maps to 399-474; it reads PVREPVRMRL…RVYGFERIPD (76 aa). 4 residues coordinate Mg(2+): aspartate 452, aspartate 458, glutamate 461, and glutamate 462. In terms of domain architecture, FDX-ACB spans 703–804; that stretch reads SRQPAVVRDL…LVAAHNARQR (102 aa).

Belongs to the phenylalanyl-tRNA synthetase beta subunit family. Type 1 subfamily. As to quaternary structure, tetramer of two alpha and two beta subunits. Requires Mg(2+) as cofactor.

The protein localises to the cytoplasm. It catalyses the reaction tRNA(Phe) + L-phenylalanine + ATP = L-phenylalanyl-tRNA(Phe) + AMP + diphosphate + H(+). In Bordetella parapertussis (strain 12822 / ATCC BAA-587 / NCTC 13253), this protein is Phenylalanine--tRNA ligase beta subunit.